Here is a 202-residue protein sequence, read N- to C-terminus: Hypoxanthine-guanine phosphoribosyltransferase (202 aa).

K66 and G67 together coordinate diphosphate. Mg(2+) is bound by residues E122 and D123. The active-site Proton acceptor is the D126. GMP-binding positions include K154, F175–V176, and D182. Residue R188 coordinates diphosphate.

This sequence belongs to the purine/pyrimidine phosphoribosyltransferase family. Requires Mg(2+) as cofactor.

It localises to the cytoplasm. It catalyses the reaction IMP + diphosphate = hypoxanthine + 5-phospho-alpha-D-ribose 1-diphosphate. The enzyme catalyses GMP + diphosphate = guanine + 5-phospho-alpha-D-ribose 1-diphosphate. It functions in the pathway purine metabolism; IMP biosynthesis via salvage pathway; IMP from hypoxanthine: step 1/1. The protein operates within purine metabolism; GMP biosynthesis via salvage pathway; GMP from guanine: step 1/1. Purine salvage pathway enzyme that catalyzes the transfer of the ribosyl-5-phosphate group from 5-phospho-alpha-D-ribose 1-diphosphate (PRPP) to the N9 position of the 6-oxopurines hypoxanthine and guanine to form the corresponding ribonucleotides IMP (inosine 5'-monophosphate) and GMP (guanosine 5'-monophosphate), with the release of PPi. The sequence is that of Hypoxanthine-guanine phosphoribosyltransferase (hpt) from Mycobacterium tuberculosis (strain CDC 1551 / Oshkosh).